A 60-amino-acid chain; its full sequence is Large ribosomal subunit protein bL32 (60 aa).

This sequence belongs to the bacterial ribosomal protein bL32 family.

The chain is Large ribosomal subunit protein bL32 from Petrotoga mobilis (strain DSM 10674 / SJ95).